The following is a 512-amino-acid chain: MTIVLNPGKVTLSQLEAVYWNGEVSKLHHDTHFAIKKGAERIAKIAAGSEPVYGINTGFGKLASIKIDADNVVVLQRNLILSHCCGVGVPLAENIVRLMMTLKLISLGRGASGVRLELVQLLENMLANGVIPVIPEKGSVGASGDLAPLAHMAAVMMGEGEAFFQNIRMSGIAALEKAGLCPITLEAKEGLALINGTQTSTALALAGLFRGYRALCGGLLAGALTTDALMGSTAPFHPDIHILRGHYGQIVVSETLEKLVKDSGIRAAHLRDDDRVQDPYCIRCQPQVMGACFDLLIAAAKTLIIEANAVTDNPLILSDDTVVSGGNFHAEPVAFAADQIALALCEIGSISQRRIALMVDPAVSYGLPAFLAKNAGLNSGFMIAEVTAAALMSENKQMAHPASVDSTPTSANQEDHVSMACHGARRLLAMSENLFTIIGIETLVAAQGIEYRAPLKTSSLLQSVMEYLRKNIDTLKGDRYLASDLHKAHILVSEGRLLSVLSETIFPQLKPK.

Positions 142-144 (ASG) form a cross-link, 5-imidazolinone (Ala-Gly). At Ser-143 the chain carries 2,3-didehydroalanine (Ser).

It belongs to the PAL/histidase family. In terms of processing, contains an active site 4-methylidene-imidazol-5-one (MIO), which is formed autocatalytically by cyclization and dehydration of residues Ala-Ser-Gly.

It localises to the cytoplasm. It catalyses the reaction L-histidine = trans-urocanate + NH4(+). Its pathway is amino-acid degradation; L-histidine degradation into L-glutamate; N-formimidoyl-L-glutamate from L-histidine: step 1/3. This chain is Histidine ammonia-lyase, found in Bartonella henselae (strain ATCC 49882 / DSM 28221 / CCUG 30454 / Houston 1) (Rochalimaea henselae).